Reading from the N-terminus, the 327-residue chain is Methionyl-tRNA formyltransferase (327 aa).

113 to 116 (SILP) contacts (6S)-5,6,7,8-tetrahydrofolate.

This sequence belongs to the Fmt family.

The enzyme catalyses L-methionyl-tRNA(fMet) + (6R)-10-formyltetrahydrofolate = N-formyl-L-methionyl-tRNA(fMet) + (6S)-5,6,7,8-tetrahydrofolate + H(+). Attaches a formyl group to the free amino group of methionyl-tRNA(fMet). The formyl group appears to play a dual role in the initiator identity of N-formylmethionyl-tRNA by promoting its recognition by IF2 and preventing the misappropriation of this tRNA by the elongation apparatus. This Colwellia psychrerythraea (strain 34H / ATCC BAA-681) (Vibrio psychroerythus) protein is Methionyl-tRNA formyltransferase.